Reading from the N-terminus, the 344-residue chain is Anthranilate phosphoribosyltransferase (344 aa).

5-phospho-alpha-D-ribose 1-diphosphate-binding positions include Gly86, 89-90 (GD), Thr94, 96-99 (NIST), 114-122 (KHGNKSASG), and Ser126. Gly86 lines the anthranilate pocket. Ser98 is a binding site for Mg(2+). Asn117 is an anthranilate binding site. Arg172 provides a ligand contact to anthranilate. 2 residues coordinate Mg(2+): Asp231 and Glu232.

It belongs to the anthranilate phosphoribosyltransferase family. Homodimer. It depends on Mg(2+) as a cofactor.

It catalyses the reaction N-(5-phospho-beta-D-ribosyl)anthranilate + diphosphate = 5-phospho-alpha-D-ribose 1-diphosphate + anthranilate. It participates in amino-acid biosynthesis; L-tryptophan biosynthesis; L-tryptophan from chorismate: step 2/5. Functionally, catalyzes the transfer of the phosphoribosyl group of 5-phosphorylribose-1-pyrophosphate (PRPP) to anthranilate to yield N-(5'-phosphoribosyl)-anthranilate (PRA). This Prochlorococcus marinus (strain MIT 9215) protein is Anthranilate phosphoribosyltransferase.